Consider the following 274-residue polypeptide: Large ribosomal subunit protein uL2 (274 aa).

A disordered region spans residues 223-264 (VAMNPVDHPHGGGEGRTSGGRHPVSPWGVPTKGYKTRSNKRT).

The protein belongs to the universal ribosomal protein uL2 family. Part of the 50S ribosomal subunit. Forms a bridge to the 30S subunit in the 70S ribosome.

One of the primary rRNA binding proteins. Required for association of the 30S and 50S subunits to form the 70S ribosome, for tRNA binding and peptide bond formation. It has been suggested to have peptidyltransferase activity; this is somewhat controversial. Makes several contacts with the 16S rRNA in the 70S ribosome. The polypeptide is Large ribosomal subunit protein uL2 (Shewanella denitrificans (strain OS217 / ATCC BAA-1090 / DSM 15013)).